Consider the following 952-residue polypeptide: Pentatricopeptide repeat-containing protein At5g04810, chloroplastic (952 aa).

The N-terminal 60 residues, 1-60 (MDNGGSVLSLSAPHFPYSATILRRHSPVASISFSLKQPPPQPPEPPESPPDLRRPEKSIG), are a transit peptide targeting the chloroplast. 2 disordered regions span residues 30–95 (SISF…VSPL) and 115–163 (LRLS…EFRQ). The span at 37–49 (QPPPQPPEPPESP) shows a compositional bias: pro residues. Low complexity predominate over residues 58–68 (SIGSSSSSSSP). Over residues 122–133 (SPPPPPPPPPPV) the composition is skewed to pro residues. The segment covering 137 to 163 (TQFRDEFRSDTKPPEEETRNPQQEFRQ) has biased composition (basic and acidic residues). One can recognise an RRM domain in the interval 167 to 238 (IFVGNLPTWI…VEFHGRILTV (72 aa)). A compositionally biased stretch (basic and acidic residues) spans 259-280 (EGEEDTKMSNKSSWHQEREGSR). Residues 259-281 (EGEEDTKMSNKSSWHQEREGSRK) are disordered. PPR repeat units follow at residues 308–342 (SRTEFGLMVKFYGRRGDMHRARETFERMRARGITP), 343–377 (TSRIYTSLIHAYAVGRDMDEALSCVRKMKEEGIEM), 378–412 (SLVTYSVIVGGFSKAGHAEAADYWFDEAKRIHKTL), 413–447 (NASIYGKIIYAHCQTCNMERAEALVREMEEEGIDA), 448–482 (PIAIYHTMMDGYTMVADEKKGLVVFKRLKECGFTP), 483–517 (TVVTYGCLINLYTKVGKISKALEVSRVMKEEGVKH), 518–552 (NLKTYSMMINGFVKLKDWANAFAVFEDMVKEGMKP), 553–587 (DVILYNNIISAFCGMGNMDRAIQTVKEMQKLRHRP), 588–622 (TTRTFMPIIHGYAKSGDMRRSLEVFDMMRRCGCVP), 623–657 (TVHTFNGLINGLVEKRQMEKAVEILDEMTLAGVSA), 658–692 (NEHTYTKIMQGYASVGDTGKAFEYFTRLQNEGLDV), 693–727 (DIFTYEALLKACCKSGRMQSALAVTKEMSARNIPR), 728–762 (NSFVYNILIDGWARRGDVWEAADLIQQMKKEGVKP), 763–797 (DIHTYTSFISACSKAGDMNRATQTIEEMEALGVKP), and 798–832 (NIKTYTTLIKGWARASLPEKALSCYEEMKAMGIKP). Residues 918-952 (DQVSDVDSDEDDVDGEDGEDDEDVNSVSDLLSPYK) form a disordered region. A compositionally biased stretch (acidic residues) spans 921-941 (SDVDSDEDDVDGEDGEDDEDV).

The protein belongs to the PPR family. P subfamily.

It is found in the plastid. Its subcellular location is the chloroplast. Its function is as follows. May play a role in the plastid ribosome biogenesis. This chain is Pentatricopeptide repeat-containing protein At5g04810, chloroplastic (PPR4), found in Arabidopsis thaliana (Mouse-ear cress).